Consider the following 607-residue polypeptide: Heterocyst differentiation ATP-binding protein HepA (607 aa).

One can recognise an ABC transmembrane type-1 domain in the interval 32–330 (AILAVIFSFL…INGTVAFLST (299 aa)). The next 5 helical transmembrane spans lie at 33-53 (ILAV…IGFL), 77-97 (ILAA…LILL), 163-182 (FSGL…YFVV), 186-208 (ISWQ…LSTL), and 290-310 (IVIS…FFFV). Residues 364–598 (IDLVSVDFGY…RGKLWKYHQM (235 aa)) form the ABC transporter domain. Residue 397 to 404 (GASGAGKT) participates in ATP binding.

Belongs to the ABC transporter superfamily.

The protein resides in the cell inner membrane. Acts early in the process of morphological differentiation of heterocysts. This chain is Heterocyst differentiation ATP-binding protein HepA (hepA), found in Nostoc sp. (strain PCC 7120 / SAG 25.82 / UTEX 2576).